The primary structure comprises 301 residues: GTPase Era (301 aa).

The Era-type G domain maps to 7-175 (YCGFIAIVGR…AAIVRKHLPE (169 aa)). Residues 15–22 (GRPNVGKS) are G1. GTP is bound at residue 15-22 (GRPNVGKS). Residues 41-45 (QTTRH) are G2. The interval 62-65 (DTPG) is G3. Residues 62–66 (DTPGL) and 124–127 (NKVD) contribute to the GTP site. Residues 124–127 (NKVD) are G4. A G5 region spans residues 154-156 (ISA). One can recognise a KH type-2 domain in the interval 206 to 283 (LGAELPYSVT…HLELWVKVKS (78 aa)).

This sequence belongs to the TRAFAC class TrmE-Era-EngA-EngB-Septin-like GTPase superfamily. Era GTPase family. In terms of assembly, monomer.

The protein localises to the cytoplasm. The protein resides in the cell inner membrane. Its function is as follows. An essential GTPase that binds both GDP and GTP, with rapid nucleotide exchange. Plays a role in 16S rRNA processing and 30S ribosomal subunit biogenesis and possibly also in cell cycle regulation and energy metabolism. The polypeptide is GTPase Era (Shigella flexneri serotype 5b (strain 8401)).